The sequence spans 315 residues: tRNA uridine(34) hydroxylase (315 aa).

The region spanning 145-235 is the Rhodanese domain; it reads MKNDFILVDM…GIIEYVNFIK (91 aa). Residue Cys-199 is the Cysteine persulfide intermediate of the active site.

This sequence belongs to the TrhO family.

The enzyme catalyses uridine(34) in tRNA + AH2 + O2 = 5-hydroxyuridine(34) in tRNA + A + H2O. In terms of biological role, catalyzes oxygen-dependent 5-hydroxyuridine (ho5U) modification at position 34 in tRNAs. The sequence is that of tRNA uridine(34) hydroxylase from Wigglesworthia glossinidia brevipalpis.